Reading from the N-terminus, the 338-residue chain is MTDLKPFLAKAASREPLTRDEARAAFDILMSGQATPSQIGGFLMALRVRGESVDEIVGAVTTMRSKMLTVEAPADAIDIVGTGGDASGTYNISTLAALIVAGAGVPVAKHGNRALSSKSGAADNLSALGVNIDVGPEIISRCIAEASVGFMFAQLHHSAMRHVGPSRVELGTRTIFNLLGPLSNPAGVRRQLLGVFSPQWLVPLAEVMRDLGSECVWVVHGDGLDEITTTGITKVAALEDGKIRTFELSPADFGVSPCVLADIKGGDGVANAAALREVLGGAKNAYRDVSLANAAASLVISGKVETIRDGMKLAAHSLDSGATALALDKLIAVSNDID.

Residues glycine 81, 84-85, threonine 89, 91-94, 109-117, and alanine 121 contribute to the 5-phospho-alpha-D-ribose 1-diphosphate site; these read GD, NIST, and KHGNRALSS. An anthranilate-binding site is contributed by glycine 81. A Mg(2+)-binding site is contributed by serine 93. Asparagine 112 is an anthranilate binding site. Arginine 167 provides a ligand contact to anthranilate. The Mg(2+) site is built by aspartate 225 and glutamate 226.

It belongs to the anthranilate phosphoribosyltransferase family. Homodimer. Mg(2+) is required as a cofactor.

It carries out the reaction N-(5-phospho-beta-D-ribosyl)anthranilate + diphosphate = 5-phospho-alpha-D-ribose 1-diphosphate + anthranilate. Its pathway is amino-acid biosynthesis; L-tryptophan biosynthesis; L-tryptophan from chorismate: step 2/5. In terms of biological role, catalyzes the transfer of the phosphoribosyl group of 5-phosphorylribose-1-pyrophosphate (PRPP) to anthranilate to yield N-(5'-phosphoribosyl)-anthranilate (PRA). The chain is Anthranilate phosphoribosyltransferase from Rhizobium etli (strain CIAT 652).